The primary structure comprises 185 residues: Dirigent protein 12 (185 aa).

Residues 1–25 form the signal peptide; that stretch reads MTNQIYKQVFSFFLSVLLLQSSTVS. C37 and C184 are joined by a disulfide. N56 and N120 each carry an N-linked (GlcNAc...) asparagine glycan.

The protein belongs to the plant dirigent protein family. Homodimer. In terms of tissue distribution, seed coat specific expression.

It is found in the secreted. The protein localises to the extracellular space. Its subcellular location is the apoplast. Functionally, dirigent proteins impart stereoselectivity on the phenoxy radical-coupling reaction, yielding optically active lignans from two molecules of coniferyl alcohol in the biosynthesis of lignans, flavonolignans, and alkaloids and thus plays a central role in plant secondary metabolism. Required for seed accumulation of neolignans. This is Dirigent protein 12 (DIR12) from Arabidopsis thaliana (Mouse-ear cress).